Consider the following 176-residue polypeptide: Peptide methionine sulfoxide reductase MsrA (176 aa).

Cys-14 is a catalytic residue.

It belongs to the MsrA Met sulfoxide reductase family.

The catalysed reaction is L-methionyl-[protein] + [thioredoxin]-disulfide + H2O = L-methionyl-(S)-S-oxide-[protein] + [thioredoxin]-dithiol. The enzyme catalyses [thioredoxin]-disulfide + L-methionine + H2O = L-methionine (S)-S-oxide + [thioredoxin]-dithiol. Has an important function as a repair enzyme for proteins that have been inactivated by oxidation. Catalyzes the reversible oxidation-reduction of methionine sulfoxide in proteins to methionine. The protein is Peptide methionine sulfoxide reductase MsrA of Halalkalibacterium halodurans (strain ATCC BAA-125 / DSM 18197 / FERM 7344 / JCM 9153 / C-125) (Bacillus halodurans).